Consider the following 704-residue polypeptide: 1,4-alpha-glucan-branching enzyme (704 aa).

Residues W94 and K131 each coordinate (1,4-alpha-D-glucosyl)n. S190 bears the Phosphoserine mark. The active-site Nucleophile is the D356. The Proton donor role is filled by E417.

Belongs to the glycosyl hydrolase 13 family. GlgB subfamily.

The protein resides in the cytoplasm. The catalysed reaction is Transfers a segment of a (1-&gt;4)-alpha-D-glucan chain to a primary hydroxy group in a similar glucan chain.. Its pathway is glycan biosynthesis; glycogen biosynthesis. Glycogen-branching enzyme participates in the glycogen biosynthetic process along with glycogenin and glycogen synthase. Generates alpha-1,6-glucosidic branches from alpha-1,4-linked glucose chains, to increase solubility of the glycogen polymer. In Saccharomyces cerevisiae (strain ATCC 204508 / S288c) (Baker's yeast), this protein is 1,4-alpha-glucan-branching enzyme (GLC3).